A 205-amino-acid chain; its full sequence is Putative 3-methyladenine DNA glycosylase (205 aa).

The protein belongs to the DNA glycosylase MPG family.

This chain is Putative 3-methyladenine DNA glycosylase, found in Bacillus cereus (strain ATCC 10987 / NRS 248).